A 98-amino-acid chain; its full sequence is Putative septation protein SpoVG (98 aa).

This sequence belongs to the SpoVG family.

Could be involved in septation. The polypeptide is Putative septation protein SpoVG (Alkaliphilus metalliredigens (strain QYMF)).